A 403-amino-acid chain; its full sequence is Acetate kinase (403 aa).

Residue Asn7 coordinates Mg(2+). Lys14 provides a ligand contact to ATP. Substrate is bound at residue Arg90. Asp147 serves as the catalytic Proton donor/acceptor. ATP-binding positions include 207–211, 283–285, and 331–335; these read HIGNG, DMR, and GVGEN. Glu386 contributes to the Mg(2+) binding site.

Belongs to the acetokinase family. In terms of assembly, homodimer. The cofactor is Mg(2+). Mn(2+) is required as a cofactor.

It localises to the cytoplasm. The enzyme catalyses acetate + ATP = acetyl phosphate + ADP. It participates in metabolic intermediate biosynthesis; acetyl-CoA biosynthesis; acetyl-CoA from acetate: step 1/2. Its function is as follows. Catalyzes the formation of acetyl phosphate from acetate and ATP. Can also catalyze the reverse reaction. Phosphorylates propionate (54%) in addition to acetate (100%). Uses GTP (100%), ITP (163%), UTP (56%), and CTP (21%) as phosphoryl donors in addition to ATP (100%). The sequence is that of Acetate kinase from Thermotoga maritima (strain ATCC 43589 / DSM 3109 / JCM 10099 / NBRC 100826 / MSB8).